Consider the following 425-residue polypeptide: MNLLIKGGRVIDPSQGIDDTLDVVVENGLVKEIGKGLATSAGAETIDASGKYVVPGLIDMHVHLRDPGLEYKEDIISGTRAAVAGGFTSVCCMPNTKPAIDNKAIASYIINKAKTEGACNVFPVGTITQGMHGDRLAEMGELKESGCVAVSDDGKPVKNSELMRRALQYAAGIGIMVISHAEELELVGEGVMNEGFTSTELGLKGIPRVAEDIATAREIMLAEYVGAPIHIAHVSTKGAVRIIREAKGRGVKVTCETAPHYFTLTDDAVRGYNTNAKMNPPLREADDLAAIKAGLKDGTIDCIATDHAPHHLDEKDVEFNEAMNGIVGLETSLPLSLKLVDEGVLNLSQLIEKMSCKPSELLGLGRGSLKAGNVADITVIDPAKQWTVTESALASKSKNSPWLGATMAGAAACTVVGGKIVFSGR.

Zn(2+) contacts are provided by histidine 61 and histidine 63. Residues 63–65 and asparagine 95 each bind substrate; that span reads HLR. Aspartate 153, histidine 180, and histidine 233 together coordinate Zn(2+). Residue asparagine 279 coordinates substrate. Residue aspartate 306 participates in Zn(2+) binding. Aspartate 306 is an active-site residue. Histidine 310 contacts substrate.

This sequence belongs to the metallo-dependent hydrolases superfamily. DHOase family. Class I DHOase subfamily. Zn(2+) serves as cofactor.

It catalyses the reaction (S)-dihydroorotate + H2O = N-carbamoyl-L-aspartate + H(+). Its pathway is pyrimidine metabolism; UMP biosynthesis via de novo pathway; (S)-dihydroorotate from bicarbonate: step 3/3. Catalyzes the reversible cyclization of carbamoyl aspartate to dihydroorotate. The chain is Dihydroorotase from Trichlorobacter lovleyi (strain ATCC BAA-1151 / DSM 17278 / SZ) (Geobacter lovleyi).